A 713-amino-acid chain; its full sequence is Cyclomaltodextrin glucanotransferase (713 aa).

The first 27 residues, 1–27 (MKKISKLTTALALSLSLALSLLGPAHA), serve as a signal peptide directing secretion. Residues 28-165 (APDTSVSNKQ…NIKVIIDFAP (138 aa)) are A1. Aspartate 54, asparagine 56, asparagine 59, and asparagine 60 together coordinate Ca(2+). A disulfide bridge links cysteine 70 with cysteine 77. Positions 78 and 80 each coordinate Ca(2+). A substrate-binding site is contributed by 127–128 (YW). Asparagine 166 contacts Ca(2+). Positions 166–229 (NHTSPASLDQ…NLYDLADLNH (64 aa)) are b. Position 167 (histidine 167) interacts with substrate. Ca(2+) is bound at residue isoleucine 217. Residue 220 to 223 (NLYD) participates in substrate binding. Aspartate 226 is a Ca(2+) binding site. The interval 230-433 (NNSTVDTYLK…LRKSNPAIAY (204 aa)) is A2. Arginine 254 contacts substrate. Aspartate 256 functions as the Nucleophile in the catalytic mechanism. 259-260 (KH) contacts substrate. A Ca(2+)-binding site is contributed by histidine 260. Glutamate 284 serves as the catalytic Proton donor. Substrate contacts are provided by histidine 354, aspartate 398, and arginine 402. The segment at 434–522 (GTTQERWINN…GTAVWQYTTA (89 aa)) is c. The tract at residues 523-609 (VTAPTIGHVG…SNVHDNFEVL (87 aa)) is d. In terms of domain architecture, IPT/TIG spans 526 to 607 (PTIGHVGPMM…TSSNVHDNFE (82 aa)). Residues 608-713 (VLSGDQVSVR…TATINVNWQP (106 aa)) form the CBM20 domain. The tract at residues 610 to 713 (SGDQVSVRFV…TATINVNWQP (104 aa)) is e.

The protein belongs to the glycosyl hydrolase 13 family. In terms of assembly, monomer. The cofactor is Ca(2+).

It is found in the secreted. The enzyme catalyses Cyclizes part of a (1-&gt;4)-alpha-D-glucan chain by formation of a (1-&gt;4)-alpha-D-glucosidic bond.. This is Cyclomaltodextrin glucanotransferase (cgt) from Bacillus sp. (strain 17-1).